Here is a 662-residue protein sequence, read N- to C-terminus: MTSKAVVFAYHDIGCTGIEALLNAGYEIAAVFTHADDPRENTFYASVARLCAERGIPLHAPEDVNHPLWLERIRQLRPDFLFSFYYRRLLGAELLACAARGAYNLHGSLLPRYRGRAPANWVLVNGETQTGVTLHRMIERADAGPILAQQAVAIDPEDTALSLHGKLRKAAGALLRDSLPLLALGVLPEVEQDESQASHFGRRTPADGLLDWHRPARQLYDLVRAVTQPYPGAFCQVGEQKLIVWSAEVVAGNHGREPGSVLSCDPLRIACGEDSLVLRFGQRGERGLYLAGTQLATELGLVEGARLRGAASGPQRRTRVLILGVNGFIGNHLSERLLRDGRYEVHGMDIGSDAIERLKADPHFHFVEGDIGIHSEWLEYHVKKCDVILPLVAIATPIEYTRNPLRVFELDFEENLRIVRYCVKYGKRVVFPSTSEVYGMCQDPDFDEDRSNLVVGPINKQRWIYSVSKQLLDRVIWAYGQQGLRFTLFRPFNWMGPRLDRLDSARIGSSRAITQLILHLVEGTPIRLVDGGAQKRCFTDVDDGIEALARIIDNRDGRCDGQIVNIGNPDNEASIRQLGEELLRQFEAHPLRAQFPPFAGFREVESRSFYGDGYQDVAHRKPSIDNARRLLDWQPTIELRETIGKTLDFFLHEALREREAQA.

A formyltransferase ArnAFT region spans residues 1-307 (MTSKAVVFAY…ELGLVEGARL (307 aa)). H106 serves as the catalytic Proton donor; for formyltransferase activity. Residues R116 and 138–142 (IERAD) contribute to the (6R)-10-formyltetrahydrofolate site. The interval 316–662 (RRTRVLILGV…EALREREAQA (347 aa)) is dehydrogenase ArnADH. NAD(+) contacts are provided by residues D349 and 370–371 (DI). UDP-alpha-D-glucuronate-binding positions include A395, Y400, and 434–435 (TS). Catalysis depends on E436, which acts as the Proton acceptor; for decarboxylase activity. UDP-alpha-D-glucuronate is bound by residues R462, N493, 527–536 (RLVDGGAQKR), and Y614. R620 (proton donor; for decarboxylase activity) is an active-site residue.

The protein in the N-terminal section; belongs to the Fmt family. UDP-L-Ara4N formyltransferase subfamily. In the C-terminal section; belongs to the NAD(P)-dependent epimerase/dehydratase family. UDP-glucuronic acid decarboxylase subfamily. In terms of assembly, homohexamer, formed by a dimer of trimers.

It carries out the reaction UDP-alpha-D-glucuronate + NAD(+) = UDP-beta-L-threo-pentopyranos-4-ulose + CO2 + NADH. It catalyses the reaction UDP-4-amino-4-deoxy-beta-L-arabinose + (6R)-10-formyltetrahydrofolate = UDP-4-deoxy-4-formamido-beta-L-arabinose + (6S)-5,6,7,8-tetrahydrofolate + H(+). The protein operates within nucleotide-sugar biosynthesis; UDP-4-deoxy-4-formamido-beta-L-arabinose biosynthesis; UDP-4-deoxy-4-formamido-beta-L-arabinose from UDP-alpha-D-glucuronate: step 1/3. It participates in nucleotide-sugar biosynthesis; UDP-4-deoxy-4-formamido-beta-L-arabinose biosynthesis; UDP-4-deoxy-4-formamido-beta-L-arabinose from UDP-alpha-D-glucuronate: step 3/3. Its pathway is bacterial outer membrane biogenesis; lipopolysaccharide biosynthesis. Bifunctional enzyme that catalyzes the oxidative decarboxylation of UDP-glucuronic acid (UDP-GlcUA) to UDP-4-keto-arabinose (UDP-Ara4O) and the addition of a formyl group to UDP-4-amino-4-deoxy-L-arabinose (UDP-L-Ara4N) to form UDP-L-4-formamido-arabinose (UDP-L-Ara4FN). The modified arabinose is attached to lipid A and is required for resistance to polymyxin and cationic antimicrobial peptides. The polypeptide is Bifunctional polymyxin resistance protein ArnA (Pseudomonas aeruginosa (strain LESB58)).